The primary structure comprises 206 residues: Imidazole glycerol phosphate synthase subunit HisH (206 aa).

The Glutamine amidotransferase type-1 domain maps to 1 to 206; that stretch reads MIVIIDYGMG…LRILKNFGDM (206 aa). Cys79 (nucleophile) is an active-site residue. Catalysis depends on residues His188 and Glu190.

In terms of assembly, heterodimer of HisH and HisF.

The protein resides in the cytoplasm. The enzyme catalyses 5-[(5-phospho-1-deoxy-D-ribulos-1-ylimino)methylamino]-1-(5-phospho-beta-D-ribosyl)imidazole-4-carboxamide + L-glutamine = D-erythro-1-(imidazol-4-yl)glycerol 3-phosphate + 5-amino-1-(5-phospho-beta-D-ribosyl)imidazole-4-carboxamide + L-glutamate + H(+). It carries out the reaction L-glutamine + H2O = L-glutamate + NH4(+). It functions in the pathway amino-acid biosynthesis; L-histidine biosynthesis; L-histidine from 5-phospho-alpha-D-ribose 1-diphosphate: step 5/9. IGPS catalyzes the conversion of PRFAR and glutamine to IGP, AICAR and glutamate. The HisH subunit catalyzes the hydrolysis of glutamine to glutamate and ammonia as part of the synthesis of IGP and AICAR. The resulting ammonia molecule is channeled to the active site of HisF. The protein is Imidazole glycerol phosphate synthase subunit HisH of Syntrophotalea carbinolica (strain DSM 2380 / NBRC 103641 / GraBd1) (Pelobacter carbinolicus).